The chain runs to 491 residues: Lysine--tRNA ligase 1 (491 aa).

Mg(2+)-binding residues include glutamate 400 and glutamate 407.

This sequence belongs to the class-II aminoacyl-tRNA synthetase family. Homodimer. It depends on Mg(2+) as a cofactor.

Its subcellular location is the cytoplasm. It catalyses the reaction tRNA(Lys) + L-lysine + ATP = L-lysyl-tRNA(Lys) + AMP + diphosphate. In Mycoplasmopsis pulmonis (strain UAB CTIP) (Mycoplasma pulmonis), this protein is Lysine--tRNA ligase 1.